Consider the following 479-residue polypeptide: MSRMNTIYAVIDLGSWYIRGMVARKMEDGRVSPISFYEEPANNCIRHGCVHNIDEAAAIIRRIVNQLNENLEDNTHITSLYVGVGGQSIASQEFIVRKAMVPEGEVIRTEHIESLWAEMRGASFPDKEVLDVTDPLFYVDGKQEIQAKGVFCHELEARFQLITARRSVKQNIRIAIEERLGLRLTGILVTPLCEAQVLLSDDELTLGCCYVNIGAGCTSVSIYKNRLLAMLRVLPMGGYNVTRDLTSLRLTEQEAENMKLNHVSMINDNKSNGSFRMTFADKFSEREFRSSEVNRLAKARMDEITANYLNILRLSGLLEDIGAGIILNGGGTKINNYMAAMKKILGEVTPAKIRMDRIDTDNAISFIEEHISTIGLAYKATQPCTDYITTNLGELVSQIETKEEIPANDTVQDLFAQGRQTERKENEQRDNTDRQREDTPKQTVKKKEKTGPSFGDKLKGAFIKFGSLFDEDTNQDNNR.

Positions 417 to 458 are disordered; it reads QGRQTERKENEQRDNTDRQREDTPKQTVKKKEKTGPSFGDKL. Residues 420–440 are compositionally biased toward basic and acidic residues; sequence QTERKENEQRDNTDRQREDTP.

This sequence belongs to the FtsA/MreB family. As to quaternary structure, self-interacts. Interacts with FtsZ.

Its subcellular location is the cell inner membrane. Cell division protein that is involved in the assembly of the Z ring. May serve as a membrane anchor for the Z ring. The sequence is that of Cell division protein FtsA from Porphyromonas gingivalis (strain ATCC BAA-308 / W83).